The sequence spans 942 residues: Serine/threonine-protein kinase ATG1 (942 aa).

Positions 11–312 (YVVEKEIGKG…FEEFFNNKIV (302 aa)) constitute a Protein kinase domain. Residues 17 to 25 (IGKGSFATV) and Lys-41 each bind ATP. The active-site Proton acceptor is the Asp-159. Positions 435–452 (NSSRVNKLDKSNLSGKSD) are enriched in polar residues. Disordered regions lie at residues 435–454 (NSSR…SDSS), 505–529 (QPHN…SRRA), and 817–836 (NSKP…NDSN). Over residues 515 to 529 (RAPSTTSGGTSSRRA) the composition is skewed to low complexity. The segment covering 819-834 (KPGTHNQSPKSKISND) has biased composition (polar residues).

Belongs to the protein kinase superfamily. Ser/Thr protein kinase family. APG1/unc-51/ULK1 subfamily. In terms of assembly, homodimer. Forms a ternary complex with ATG13 and ATG17.

The protein localises to the cytoplasm. The protein resides in the preautophagosomal structure membrane. The catalysed reaction is L-seryl-[protein] + ATP = O-phospho-L-seryl-[protein] + ADP + H(+). The enzyme catalyses L-threonyl-[protein] + ATP = O-phospho-L-threonyl-[protein] + ADP + H(+). Serine/threonine protein kinase involved in the cytoplasm to vacuole transport (Cvt) and found to be essential in autophagy, where it is required for the formation of autophagosomes. Involved in the clearance of protein aggregates which cannot be efficiently cleared by the proteasome. Required for selective autophagic degradation of the nucleus (nucleophagy) as well as for mitophagy which contributes to regulate mitochondrial quantity and quality by eliminating the mitochondria to a basal level to fulfill cellular energy requirements and preventing excess ROS production. Also involved in endoplasmic reticulum-specific autophagic process, in selective removal of ER-associated degradation (ERAD) substrates. Plays a key role in ATG9 and ATG23 cycling through the pre-autophagosomal structure and is necessary to promote ATG18 binding to ATG9 through phosphorylation of ATG9. Catalyzes phosphorylation of ATG4, decreasing the interaction between ATG4 and ATG8 and impairing deconjugation of PE-conjugated forms of ATG8. Contributes to virulence by conferring resistance to unstable nutrient environments and immune defense of hosts. This is Serine/threonine-protein kinase ATG1 from Candida glabrata (strain ATCC 2001 / BCRC 20586 / JCM 3761 / NBRC 0622 / NRRL Y-65 / CBS 138) (Yeast).